The sequence spans 96 residues: Large ribosomal subunit protein bL28 (96 aa).

Over residues 1–22 the composition is skewed to polar residues; that stretch reads MSRSCELTGKGVQSGNNVSHAN. Positions 1–24 are disordered; that stretch reads MSRSCELTGKGVQSGNNVSHANNK.

Belongs to the bacterial ribosomal protein bL28 family.

The polypeptide is Large ribosomal subunit protein bL28 (Sinorhizobium medicae (strain WSM419) (Ensifer medicae)).